A 373-amino-acid chain; its full sequence is Chaperone protein DnaJ (373 aa).

One can recognise a J domain in the interval 5-70 (DFYATLGVAR…EKRAMYDQYG (66 aa)). A CR-type zinc finger spans residues 134-212 (GVKKRINIPT…CRGVGRNKAV (79 aa)). Zn(2+)-binding residues include C147, C150, C164, C167, C186, C189, C200, and C203. 4 CXXCXGXG motif repeats span residues 147–154 (CDVCNGSG), 164–171 (CPTCKGSG), 186–193 (CPTCRGAG), and 200–207 (CVKCRGVG).

The protein belongs to the DnaJ family. Homodimer. Zn(2+) is required as a cofactor.

It is found in the cytoplasm. Its function is as follows. Participates actively in the response to hyperosmotic and heat shock by preventing the aggregation of stress-denatured proteins and by disaggregating proteins, also in an autonomous, DnaK-independent fashion. Unfolded proteins bind initially to DnaJ; upon interaction with the DnaJ-bound protein, DnaK hydrolyzes its bound ATP, resulting in the formation of a stable complex. GrpE releases ADP from DnaK; ATP binding to DnaK triggers the release of the substrate protein, thus completing the reaction cycle. Several rounds of ATP-dependent interactions between DnaJ, DnaK and GrpE are required for fully efficient folding. Also involved, together with DnaK and GrpE, in the DNA replication of plasmids through activation of initiation proteins. The polypeptide is Chaperone protein DnaJ (Neisseria gonorrhoeae (strain ATCC 700825 / FA 1090)).